A 412-amino-acid chain; its full sequence is uncharacterized protein (412 aa).

Cys-62, Cys-68, Cys-71, and Cys-143 together coordinate [4Fe-4S] cluster. 4 residues coordinate S-adenosyl-L-methionine: Gln-243, Phe-270, Glu-290, and Asp-338. The Nucleophile role is filled by Cys-364.

Belongs to the class I-like SAM-binding methyltransferase superfamily. RNA M5U methyltransferase family.

This is an uncharacterized protein from Mesorhizobium japonicum (strain LMG 29417 / CECT 9101 / MAFF 303099) (Mesorhizobium loti (strain MAFF 303099)).